A 247-amino-acid chain; its full sequence is MKIIISPAKKMVEDTDSFDISKLPIFKDKAEVLLTWLKSKNYDELKNIWKCNDKIAKLNYDRVQDMNLDENLTPAVMAYSGIQYQAMGPQVFTQEALQRAAKDLYIISGFYGILGAMDGITPYRLEMQAKVDINDQHTLYQFWGDSIYQELYRDNELVVNLASKEYSKAIERYLKPQDKFIICSFKKEKNGKYVQQATAAKQARGDMVRYILENNIKEIDEIKNFSVNGYQYEPQFSTDTELVFIKN.

The protein belongs to the UPF0246 family.

This is UPF0246 protein LSL_1719 from Ligilactobacillus salivarius (strain UCC118) (Lactobacillus salivarius).